Reading from the N-terminus, the 344-residue chain is tRNA N6-adenosine threonylcarbamoyltransferase (344 aa).

2 residues coordinate Fe cation: histidine 112 and histidine 116. Residues 134–138 (LASGG), aspartate 167, glycine 180, and asparagine 280 each bind substrate. Aspartate 308 serves as a coordination point for Fe cation.

The protein belongs to the KAE1 / TsaD family. Fe(2+) serves as cofactor.

It is found in the cytoplasm. It catalyses the reaction L-threonylcarbamoyladenylate + adenosine(37) in tRNA = N(6)-L-threonylcarbamoyladenosine(37) in tRNA + AMP + H(+). Its function is as follows. Required for the formation of a threonylcarbamoyl group on adenosine at position 37 (t(6)A37) in tRNAs that read codons beginning with adenine. Is involved in the transfer of the threonylcarbamoyl moiety of threonylcarbamoyl-AMP (TC-AMP) to the N6 group of A37, together with TsaE and TsaB. TsaD likely plays a direct catalytic role in this reaction. The protein is tRNA N6-adenosine threonylcarbamoyltransferase of Rickettsia peacockii (strain Rustic).